The chain runs to 58 residues: Large ribosomal subunit protein bL32 (58 aa).

Residues 1-23 form a disordered region; the sequence is MAVPARHTSSAKKNRRRTHYKLT. Residues 9–20 are compositionally biased toward basic residues; the sequence is SSAKKNRRRTHY.

Belongs to the bacterial ribosomal protein bL32 family.

In Lactococcus lactis subsp. cremoris (Streptococcus cremoris), this protein is Large ribosomal subunit protein bL32 (rpmF).